The sequence spans 498 residues: Glycerol kinase (498 aa).

T14 provides a ligand contact to ADP. The ATP site is built by T14 and T15. Residue T14 coordinates sn-glycerol 3-phosphate. Residue R18 participates in ADP binding. Sn-glycerol 3-phosphate-binding residues include R84, E85, Y136, and D246. Glycerol contacts are provided by R84, E85, Y136, D246, and Q247. T268 and G311 together coordinate ADP. ATP-binding residues include T268, G311, Q315, and G412. ADP is bound by residues G412 and N416.

Belongs to the FGGY kinase family.

The enzyme catalyses glycerol + ATP = sn-glycerol 3-phosphate + ADP + H(+). It participates in polyol metabolism; glycerol degradation via glycerol kinase pathway; sn-glycerol 3-phosphate from glycerol: step 1/1. Its activity is regulated as follows. Inhibited by fructose 1,6-bisphosphate (FBP). Functionally, key enzyme in the regulation of glycerol uptake and metabolism. Catalyzes the phosphorylation of glycerol to yield sn-glycerol 3-phosphate. This Leptospira biflexa serovar Patoc (strain Patoc 1 / Ames) protein is Glycerol kinase.